A 912-amino-acid polypeptide reads, in one-letter code: Protein translocase subunit SecA (912 aa).

ATP contacts are provided by residues Q87, 105-109, and D512; that span reads GEGKT. C896, C898, C907, and H908 together coordinate Zn(2+).

Belongs to the SecA family. As to quaternary structure, monomer and homodimer. Part of the essential Sec protein translocation apparatus which comprises SecA, SecYEG and auxiliary proteins SecDF-YajC and YidC. Zn(2+) serves as cofactor.

Its subcellular location is the cell inner membrane. The protein resides in the cytoplasm. It catalyses the reaction ATP + H2O + cellular proteinSide 1 = ADP + phosphate + cellular proteinSide 2.. Functionally, part of the Sec protein translocase complex. Interacts with the SecYEG preprotein conducting channel. Has a central role in coupling the hydrolysis of ATP to the transfer of proteins into and across the cell membrane, serving both as a receptor for the preprotein-SecB complex and as an ATP-driven molecular motor driving the stepwise translocation of polypeptide chains across the membrane. In Pseudomonas fluorescens (strain Pf0-1), this protein is Protein translocase subunit SecA.